The primary structure comprises 314 residues: MYKNNHANHSNHLENHDLDNFSKTGYSNSRLDAHTVCISDPKLSFDAMTIVGNLNRDNAQALSKFMSVEPQIRLWDILQTKFKAKALQEKVYIEYDKVKADSWDRRNMRIEFNPNKLTRDEMIWLKQNIISYMEDDGFTRLDLAFDFEEDLSDYYAMSDKAVKKTIFYGRNGKPETKYFGVRDSNRFIRIYNKKQERKDNADAEVMSEHLWRVEIELKRDMVDYWNDCFSDLHILQPDWKTIQRTADRAIVFMLLSDEEEWGKLHRNSRTKYKNLIKEISPVDLTDLMKSTLKANEKQLQKQIDFWQHEFKFWK.

This sequence belongs to the plasmid replication initiation factor family.

In terms of biological role, this protein is probably a specific topoisomerase involved in initiating replication. This protein is specifically required and may be rate-limiting for replication of the plasmid in vivo. The sequence is that of Replication initiation protein (repC) from Staphylococcus aureus.